The following is a 137-amino-acid chain: DNA polymerase III subunit psi (137 aa).

It belongs to the DNA polymerase III psi/HolD chain family. As to quaternary structure, the DNA polymerase III holoenzyme complex contains at least 10 different subunits organized into 3 functionally essential subassemblies: the Pol III core, the beta sliding clamp processivity factor and the clamp-loading complex. The Pol III core (subunits alpha, epsilon and theta) contains the polymerase and the 3'-5' exonuclease proofreading activities. The polymerase is tethered to the template via the dimeric beta sliding clamp processivity factor. The clamp-loading complex (also called gamma complex) assembles the beta sliding clamp onto the primed template and plays a central role in the organization and communication at the replication fork. The clamp-loading complex contains delta, delta', psi and chi, and 3 copies of either or both of two different DnaX proteins, gamma and tau. The DNA replisome complex has a single clamp loader (3 tau and 1 each of delta, delta', psi and chi subunits) which binds 3 Pol III cores (1 core on the leading strand and 2 on the lagging strand) each with a beta sliding clamp dimer. Additional proteins in the replisome are other copies of gamma, psi (this protein) and chi (holC), SSB, DNA helicase and RNA primase. The clamp loader hydrolyzes ATP to assemble the beta processivity factor onto the primed template and plays a central role in the organization and communication at the replication fork. Interacts directly with the chi subunit (holC).

The enzyme catalyses DNA(n) + a 2'-deoxyribonucleoside 5'-triphosphate = DNA(n+1) + diphosphate. Functionally, part of the beta sliding clamp loading complex, which hydrolyzes ATP to load the beta clamp onto primed DNA to form the DNA replication pre-initiation complex. DNA polymerase III is a complex, multichain enzyme responsible for most of the replicative synthesis in bacteria. This DNA polymerase also exhibits 3' to 5' exonuclease activity. In Escherichia coli (strain K12), this protein is DNA polymerase III subunit psi.